Reading from the N-terminus, the 421-residue chain is Diaminopimelate decarboxylase (421 aa).

At Lys-63 the chain carries N6-(pyridoxal phosphate)lysine. Pyridoxal 5'-phosphate contacts are provided by residues Gly-242 and 278 to 281; that span reads EPGR. Residues Arg-281, Arg-317, and Tyr-321 each contribute to the substrate site. Catalysis depends on Cys-346, which acts as the Proton donor. 2 residues coordinate substrate: Glu-347 and Tyr-375. A pyridoxal 5'-phosphate-binding site is contributed by Tyr-375.

This sequence belongs to the Orn/Lys/Arg decarboxylase class-II family. LysA subfamily. As to quaternary structure, homodimer. Pyridoxal 5'-phosphate is required as a cofactor.

The enzyme catalyses meso-2,6-diaminopimelate + H(+) = L-lysine + CO2. It functions in the pathway amino-acid biosynthesis; L-lysine biosynthesis via DAP pathway; L-lysine from DL-2,6-diaminopimelate: step 1/1. Its function is as follows. Specifically catalyzes the decarboxylation of meso-diaminopimelate (meso-DAP) to L-lysine. The chain is Diaminopimelate decarboxylase from Zymomonas mobilis subsp. mobilis (strain ATCC 31821 / ZM4 / CP4).